The following is a 289-amino-acid chain: Spore coat polysaccharide biosynthesis protein SpsD (289 aa).

One can recognise an N-acetyltransferase domain in the interval 137–289 (FELGPPEPGD…YHIWPGKEAK (153 aa)).

It participates in spore coat biogenesis; spore coat polysaccharide biosynthesis. The sequence is that of Spore coat polysaccharide biosynthesis protein SpsD (spsD) from Bacillus subtilis (strain 168).